A 374-amino-acid polypeptide reads, in one-letter code: All-trans-retinol dehydrogenase [NAD(+)] ADH7 (374 aa).

The residue at position 1 (M1) is an N-acetylmethionine. 7 residues coordinate Zn(2+): C47, H68, C98, C101, C104, C112, and C174. NAD(+) contacts are provided by residues 199–204 (GLGGVG), D223, K228, 292–294 (VGA), and R369.

Belongs to the zinc-containing alcohol dehydrogenase family. Class-IV subfamily. In terms of assembly, homodimer. Requires Zn(2+) as cofactor. Preferentially expressed in stomach.

It is found in the cytoplasm. The enzyme catalyses a primary alcohol + NAD(+) = an aldehyde + NADH + H(+). It catalyses the reaction 10-hydroxydecanoate + NAD(+) = 10-oxodecanoate + NADH + H(+). The catalysed reaction is all-trans-retinol + NAD(+) = all-trans-retinal + NADH + H(+). It carries out the reaction 9-cis-retinol + NAD(+) = 9-cis-retinal + NADH + H(+). The enzyme catalyses all-trans-3,4-didehydroretinol + NAD(+) = all-trans-3,4-didehydroretinal + NADH + H(+). It catalyses the reaction all-trans-4-hydroxyretinol + NAD(+) = all-trans-4-hydroxyretinal + NADH + H(+). The catalysed reaction is all-trans-4-oxoretinol + NAD(+) = all-trans-4-oxoretinal + NADH + H(+). It carries out the reaction 12-hydroxydodecanoate + NAD(+) = 12-oxododecanoate + NADH + H(+). The enzyme catalyses 16-hydroxyhexadecanoate + NAD(+) = 16-oxohexadecanoate + NADH + H(+). It catalyses the reaction hexan-1-ol + NAD(+) = hexanal + NADH + H(+). The catalysed reaction is (E)-hex-2-en-1-ol + NAD(+) = (E)-hex-2-enal + NADH + H(+). It carries out the reaction (E)-4-hydroxynon-2-en-1-ol + NAD(+) = (E)-4-hydroxynon-2-enal + NADH + H(+). With respect to regulation, retinol oxidation is inhibited by the detergent Tween 80. Ethanol inhibits both all-trans-retinol and 9-cis-retinol oxidation. 13-cis-retinol is an effective competitive inhibitor of the 9-cis-retinol oxidation. All-trans-retinoic acid is a powerful inhibitor of all-trans-retinol oxidation. 13-cis-retinoic acid is a powerful inhibitor of all-trans-retinol oxidation. Cimetidine and ranitidine inhibited ethanol oxidation. Its function is as follows. Catalyzes the NAD-dependent oxidation of all-trans-retinol, alcohol, aldehyde and omega-hydroxy fatty acids and their derivatives. Oxidizes preferentially all trans-retinol, all-trans-4-hydroxyretinol, 9-cis-retinol, 2-hexenol, and long chain omega-hydroxy fatty acids such as juniperic acid. In vitro can also catalyze the NADH-dependent reduction of all-trans-retinal and aldehydes and their derivatives. Reduces preferentially all trans-retinal, all-trans-4-oxoretinal and hexanal. Catalyzes in the oxidative direction with higher efficiency. Therefore may participate in retinoid metabolism, fatty acid omega-oxidation, and elimination of cytotoxic aldehydes produced by lipid peroxidation. This chain is All-trans-retinol dehydrogenase [NAD(+)] ADH7 (Adh7), found in Rattus norvegicus (Rat).